A 434-amino-acid chain; its full sequence is UPF0597 protein CLB_1949 (434 aa).

This sequence belongs to the UPF0597 family.

This Clostridium botulinum (strain ATCC 19397 / Type A) protein is UPF0597 protein CLB_1949.